We begin with the raw amino-acid sequence, 378 residues long: TelA-like protein SAB1262 (378 aa).

The protein belongs to the TelA family.

This is TelA-like protein SAB1262 from Staphylococcus aureus (strain bovine RF122 / ET3-1).